A 254-amino-acid chain; its full sequence is (2Z,6E)-farnesyl diphosphate synthase (254 aa).

Aspartate 34 is an active-site residue. Residue aspartate 34 coordinates Mg(2+). Residues 35–38 (GNRR), tryptophan 39, histidine 52, and 80–82 (STD) each bind substrate. Asparagine 83 (proton acceptor) is an active-site residue. Residues arginine 86, arginine 203, and 209–211 (RLS) contribute to the substrate site. Glutamate 222 is a binding site for Mg(2+).

The protein belongs to the UPP synthase family. Z-FPP synthase subfamily. As to quaternary structure, homodimer. Mg(2+) is required as a cofactor.

The enzyme catalyses isopentenyl diphosphate + (2E)-geranyl diphosphate = (2Z,6E)-farnesyl diphosphate + diphosphate. Functionally, catalyzes the condensation of only one isopentenyl pyrophosphate (IPP) unit in the cis configuration to E-geranyl diphosphate (E-GPP) generating the 15 carbon product (2Z,6E)-farnesyl diphosphate (Z-FPP or EZ-FPP). Only geranyl diphosphate (GPP) can be used as isoprenyl acceptor. The polypeptide is (2Z,6E)-farnesyl diphosphate synthase (Thermobifida fusca (strain YX)).